Reading from the N-terminus, the 322-residue chain is Corticotropin-releasing factor-binding protein (322 aa).

The N-terminal stretch at 1–24 (MSPNFKLQCHFILIFLTALRGESR) is a signal peptide. 5 disulfides stabilise this stretch: cysteine 60-cysteine 81, cysteine 104-cysteine 141, cysteine 183-cysteine 205, cysteine 237-cysteine 264, and cysteine 277-cysteine 318. Asparagine 204 carries N-linked (GlcNAc...) asparagine glycosylation.

The protein belongs to the CRF-binding protein family.

The protein resides in the secreted. In terms of biological role, binds CRF and inactivates it. May prevent inappropriate pituitary-adrenal stimulation in pregnancy. The sequence is that of Corticotropin-releasing factor-binding protein (CRHBP) from Homo sapiens (Human).